Consider the following 335-residue polypeptide: Putative zinc metalloprotease CPE1693 (335 aa).

His-17 is a Zn(2+) binding site. Residue Glu-18 is part of the active site. His-21 contributes to the Zn(2+) binding site. 3 consecutive transmembrane segments (helical) span residues 88-110 (ILVMGAGAFMNYVLALIIFIGLA), 262-284 (LLWFMAFLSVQLAVFNLLPFPAL), and 312-334 (TVGFMLLMGLMVLVTIKDIIFPI). In terms of domain architecture, PDZ spans 96–174 (FMNYVLALII…PVELEIKRGN (79 aa)).

This sequence belongs to the peptidase M50B family. Zn(2+) is required as a cofactor.

The protein localises to the cell membrane. The polypeptide is Putative zinc metalloprotease CPE1693 (Clostridium perfringens (strain 13 / Type A)).